Here is a 331-residue protein sequence, read N- to C-terminus: Protein REVEILLE 6 (331 aa).

Residues 67-121 (TITKSRESWTEPEHDKFLEALQLFDRDWKKIEAFIGSKTVIQIRSHAQKYFLKVQ) form the HTH myb-type domain. The H-T-H motif DNA-binding region spans 94–117 (WKKIEAFIGSKTVIQIRSHAQKYF). Disordered regions lie at residues 122–166 (KSGT…EPND), 203–237 (LPKA…GNVG), and 309–331 (SETA…EIST). A compositionally biased stretch (polar residues) spans 150 to 165 (VQLQVPGSFKSTSEPN). A compositionally biased stretch (low complexity) spans 211 to 220 (NNNCSSSSEN). 2 stretches are compositionally biased toward basic and acidic residues: residues 226 to 235 (SNRDARDHGN) and 322 to 331 (LNKDPPEIST).

Its subcellular location is the nucleus. Its function is as follows. Probable transcription factor. RVE4, RVE6 and RVE8 are components of the circadian system acting synergistically to regulate flowering time, redundantly to regulate leaf growth, and antagonistically to regulate hypocotyl elongation; their action seems independent of ZTL and HY5. This Arabidopsis thaliana (Mouse-ear cress) protein is Protein REVEILLE 6.